We begin with the raw amino-acid sequence, 339 residues long: tRNA pseudouridine synthase B (339 aa).

D40 functions as the Nucleophile in the catalytic mechanism. Residues 262–307 (FRRLSKFAYREEFEENTERSTAAYTLVREDANTGLTYKLPLEVELS) form the RPE1 insert domain.

The protein belongs to the pseudouridine synthase TruB family. Type 1 subfamily.

It catalyses the reaction uridine(55) in tRNA = pseudouridine(55) in tRNA. Its function is as follows. Responsible for synthesis of pseudouridine from uracil-55 in the psi GC loop of transfer RNAs. The sequence is that of tRNA pseudouridine synthase B from Rickettsia felis (strain ATCC VR-1525 / URRWXCal2) (Rickettsia azadi).